The following is a 98-amino-acid chain: NADH-ubiquinone oxidoreductase chain 4L (98 aa).

3 helical membrane-spanning segments follow: residues Met-1–Val-21, Leu-26–Leu-46, and Ile-61–Ile-81.

Belongs to the complex I subunit 4L family. As to quaternary structure, core subunit of respiratory chain NADH dehydrogenase (Complex I) which is composed of 45 different subunits.

The protein localises to the mitochondrion inner membrane. The catalysed reaction is a ubiquinone + NADH + 5 H(+)(in) = a ubiquinol + NAD(+) + 4 H(+)(out). Core subunit of the mitochondrial membrane respiratory chain NADH dehydrogenase (Complex I) which catalyzes electron transfer from NADH through the respiratory chain, using ubiquinone as an electron acceptor. Part of the enzyme membrane arm which is embedded in the lipid bilayer and involved in proton translocation. In Chlorocebus sabaeus (Green monkey), this protein is NADH-ubiquinone oxidoreductase chain 4L (MT-ND4L).